The primary structure comprises 40 residues: Thioredoxin (40 aa).

Cysteines 29 and 32 form a disulfide.

This sequence belongs to the thioredoxin family.

In terms of biological role, participates in various redox reactions through the reversible oxidation of its active center dithiol to a disulfide and catalyzes dithiol-disulfide exchange reactions. The polypeptide is Thioredoxin (trxA) (Clostridium sporogenes).